Here is a 163-residue protein sequence, read N- to C-terminus: Phosphopantetheine adenylyltransferase (163 aa).

Substrate is bound at residue Ser9. ATP is bound by residues 9–10 and His17; that span reads SF. The substrate site is built by Lys41, Ile75, and Arg89. Residues 90–92, Glu100, and 125–131 each bind ATP; these read GIR and HLYVRSD.

It belongs to the bacterial CoaD family. Homohexamer. Mg(2+) is required as a cofactor.

It is found in the cytoplasm. It carries out the reaction (R)-4'-phosphopantetheine + ATP + H(+) = 3'-dephospho-CoA + diphosphate. It participates in cofactor biosynthesis; coenzyme A biosynthesis; CoA from (R)-pantothenate: step 4/5. Functionally, reversibly transfers an adenylyl group from ATP to 4'-phosphopantetheine, yielding dephospho-CoA (dPCoA) and pyrophosphate. The sequence is that of Phosphopantetheine adenylyltransferase from Borrelia garinii subsp. bavariensis (strain ATCC BAA-2496 / DSM 23469 / PBi) (Borreliella bavariensis).